Reading from the N-terminus, the 513-residue chain is Probable DNA ligase (513 aa).

Glutamate 213 serves as a coordination point for ATP. Lysine 215 acts as the N6-AMP-lysine intermediate in catalysis. Arginine 220, arginine 235, glutamate 264, phenylalanine 304, arginine 376, and lysine 382 together coordinate ATP.

This sequence belongs to the ATP-dependent DNA ligase family. Requires Mg(2+) as cofactor.

The catalysed reaction is ATP + (deoxyribonucleotide)n-3'-hydroxyl + 5'-phospho-(deoxyribonucleotide)m = (deoxyribonucleotide)n+m + AMP + diphosphate.. Functionally, DNA ligase that seals nicks in double-stranded DNA during DNA replication, DNA recombination and DNA repair. This chain is Probable DNA ligase, found in Anaeromyxobacter dehalogenans (strain 2CP-1 / ATCC BAA-258).